The chain runs to 114 residues: Abscisic stress-ripening protein 2 (114 aa).

Disordered regions lie at residues 1–25 (MAEE…GGPV) and 88–114 (FHEH…HHHY). Residues 7–16 (QHHHHLFHHK) show a composition bias toward basic residues. A compositionally biased stretch (basic and acidic residues) spans 97–107 (AKKEKKEVEGG).

It belongs to the abscisic acid and water stress-induced protein family.

This chain is Abscisic stress-ripening protein 2, found in Solanum lycopersicum (Tomato).